Reading from the N-terminus, the 393-residue chain is uncharacterized protein (393 aa).

The 265-residue stretch at 2–266 (AMIGLVGKPN…AEKAGIIKRK (265 aa)) folds into the OBG-type G domain. Residues 8–15 (GKPNVGKS) and 78–82 (DVAGL) each bind GTP. Residues 314 to 390 (DMIVVYPVED…KHNDIIKIVS (77 aa)) form the TGS domain.

Belongs to the TRAFAC class OBG-HflX-like GTPase superfamily. OBG GTPase family.

This is an uncharacterized protein from Methanocaldococcus jannaschii (strain ATCC 43067 / DSM 2661 / JAL-1 / JCM 10045 / NBRC 100440) (Methanococcus jannaschii).